Reading from the N-terminus, the 564-residue chain is MMMTKQKNTLAERLNIGDEVRELKLGSTFNPKNTSTAFHTIKYDFKPASVDTSRMATVDVGSNNQVTVIVPNSELALNVRLLIFGLTESSGVPHTVYKGNQREYAKECLMIYDKETGAITIEKLNHNIQVKKTRTEVTNKPVQLPAQSVPMNMGHQGQVLGTNGSVPPPMAQLAQGPLSGPGGKLENSTMRVSSKTKVSTGSRRNNIIDFKPRNSPMQQSSPSRPVVTHRSPQSAPAWDANNAQQTLPSIPMITDDDDFGLRAALHNGGQANISGSSTGSSSGQPDLYGSSSSSHMGKQRQAHGKRQQIHQRSSPPVQQQPHYQQQQQPNYGRAYNGASNYAQQQQPQPQQQRHSPHQQPHQQQHQRHSPQQQQQRHSPQQLQQQRPTSYGHSNNMPMDLDSSREHDLASQSVAQAAAVLEQQIGGALSASSSSSESDSSDSDSGSDSDDSTEDDRSMKEQQEQQQQQQLQHQQLQLQHQQIQQPAPHHQRHQQQQSQQHMNQLPNLGLGSISPSYNNHHNHQQPQPQPQQQQMSGVYASNGGFPNDLLQNDLQLSSNSSDDDD.

Disordered stretches follow at residues 179 to 255 (SGPG…MITD) and 270 to 564 (QANI…DDDD). The span at 186–205 (ENSTMRVSSKTKVSTGSRRN) shows a compositional bias: polar residues. S215 carries the phosphoserine modification. The segment covering 274-283 (SGSSTGSSSG) has biased composition (low complexity). Residues 297 to 309 (GKQRQAHGKRQQI) are compositionally biased toward basic residues. Low complexity-rich tracts occupy residues 315–329 (PPVQ…QQQP), 343–387 (QQQQ…QQRP), and 409–420 (ASQSVAQAAAVL). The segment covering 438-453 (DSSDSDSGSDSDDSTE) has biased composition (acidic residues). 3 stretches are compositionally biased toward low complexity: residues 463 to 505 (EQQQ…NQLP), 523 to 533 (QQPQPQPQQQQ), and 546 to 564 (NDLL…DDDD).

This sequence belongs to the EAF family.

The protein localises to the nucleus. Functionally, promotes transcriptional elongation by Su(Tpl)/ELL. Essential for development. The sequence is that of Ell-associated factor Eaf from Drosophila pseudoobscura pseudoobscura (Fruit fly).